A 566-amino-acid chain; its full sequence is Sulfite reductase [NADPH] hemoprotein beta-component (566 aa).

4 residues coordinate [4Fe-4S] cluster: Cys430, Cys436, Cys475, and Cys479. Residue Cys479 coordinates siroheme.

The protein belongs to the nitrite and sulfite reductase 4Fe-4S domain family. In terms of assembly, alpha(8)-beta(8). The alpha component is a flavoprotein, the beta component is a hemoprotein. The cofactor is siroheme. [4Fe-4S] cluster serves as cofactor.

It carries out the reaction hydrogen sulfide + 3 NADP(+) + 3 H2O = sulfite + 3 NADPH + 4 H(+). Its pathway is sulfur metabolism; hydrogen sulfide biosynthesis; hydrogen sulfide from sulfite (NADPH route): step 1/1. Functionally, component of the sulfite reductase complex that catalyzes the 6-electron reduction of sulfite to sulfide. This is one of several activities required for the biosynthesis of L-cysteine from sulfate. This Baumannia cicadellinicola subsp. Homalodisca coagulata protein is Sulfite reductase [NADPH] hemoprotein beta-component.